The sequence spans 203 residues: dITP/XTP pyrophosphatase (203 aa).

Residue 8-13 (TANKGK) participates in substrate binding. Glu41 and Asp70 together coordinate Mg(2+). The active-site Proton acceptor is the Asp70. Substrate-binding positions include Ser71, 153-156 (FGYD), Lys176, and 181-182 (HR).

This sequence belongs to the HAM1 NTPase family. In terms of assembly, homodimer. It depends on Mg(2+) as a cofactor.

It catalyses the reaction XTP + H2O = XMP + diphosphate + H(+). The catalysed reaction is dITP + H2O = dIMP + diphosphate + H(+). The enzyme catalyses ITP + H2O = IMP + diphosphate + H(+). Pyrophosphatase that catalyzes the hydrolysis of nucleoside triphosphates to their monophosphate derivatives, with a high preference for the non-canonical purine nucleotides XTP (xanthosine triphosphate), dITP (deoxyinosine triphosphate) and ITP. Seems to function as a house-cleaning enzyme that removes non-canonical purine nucleotides from the nucleotide pool, thus preventing their incorporation into DNA/RNA and avoiding chromosomal lesions. This chain is dITP/XTP pyrophosphatase, found in Listeria monocytogenes serovar 1/2a (strain ATCC BAA-679 / EGD-e).